We begin with the raw amino-acid sequence, 458 residues long: UDP-N-acetylmuramoylalanine--D-glutamate ligase (458 aa).

124-130 (GSDGKTT) is an ATP binding site.

Belongs to the MurCDEF family.

It localises to the cytoplasm. It catalyses the reaction UDP-N-acetyl-alpha-D-muramoyl-L-alanine + D-glutamate + ATP = UDP-N-acetyl-alpha-D-muramoyl-L-alanyl-D-glutamate + ADP + phosphate + H(+). The protein operates within cell wall biogenesis; peptidoglycan biosynthesis. Cell wall formation. Catalyzes the addition of glutamate to the nucleotide precursor UDP-N-acetylmuramoyl-L-alanine (UMA). This Clostridium perfringens (strain 13 / Type A) protein is UDP-N-acetylmuramoylalanine--D-glutamate ligase.